A 189-amino-acid polypeptide reads, in one-letter code: Small ribosomal subunit protein uS5 (189 aa).

The region spanning 22-85 (FVDKLVAINR…EAAKRDLIFV (64 aa)) is the S5 DRBM domain.

This sequence belongs to the universal ribosomal protein uS5 family. Part of the 30S ribosomal subunit. Contacts proteins S4 and S8.

Its function is as follows. With S4 and S12 plays an important role in translational accuracy. In terms of biological role, located at the back of the 30S subunit body where it stabilizes the conformation of the head with respect to the body. The sequence is that of Small ribosomal subunit protein uS5 from Sinorhizobium medicae (strain WSM419) (Ensifer medicae).